We begin with the raw amino-acid sequence, 450 residues long: tRNA modification GTPase MnmE (450 aa).

Residues Arg-20, Glu-78, and Lys-117 each contribute to the (6S)-5-formyl-5,6,7,8-tetrahydrofolate site. The 162-residue stretch at 211 to 372 (GLRMVIVGKP…LEESIYRETQ (162 aa)) folds into the TrmE-type G domain. Asn-221 contributes to the K(+) binding site. GTP contacts are provided by residues 221–226 (NVGKST), 240–246 (TDIPGTT), and 265–268 (DTAG). Position 225 (Ser-225) interacts with Mg(2+). Residues Thr-240, Ile-242, and Thr-245 each coordinate K(+). Thr-246 is a Mg(2+) binding site. Position 450 (Lys-450) interacts with (6S)-5-formyl-5,6,7,8-tetrahydrofolate.

Belongs to the TRAFAC class TrmE-Era-EngA-EngB-Septin-like GTPase superfamily. TrmE GTPase family. In terms of assembly, homodimer. Heterotetramer of two MnmE and two MnmG subunits. The cofactor is K(+).

The protein resides in the cytoplasm. In terms of biological role, exhibits a very high intrinsic GTPase hydrolysis rate. Involved in the addition of a carboxymethylaminomethyl (cmnm) group at the wobble position (U34) of certain tRNAs, forming tRNA-cmnm(5)s(2)U34. The polypeptide is tRNA modification GTPase MnmE (Thermotoga sp. (strain RQ2)).